Here is a 93-residue protein sequence, read N- to C-terminus: Putative pterin-4-alpha-carbinolamine dehydratase (93 aa).

This sequence belongs to the pterin-4-alpha-carbinolamine dehydratase family.

The catalysed reaction is (4aS,6R)-4a-hydroxy-L-erythro-5,6,7,8-tetrahydrobiopterin = (6R)-L-erythro-6,7-dihydrobiopterin + H2O. This Trichormus variabilis (strain ATCC 29413 / PCC 7937) (Anabaena variabilis) protein is Putative pterin-4-alpha-carbinolamine dehydratase.